The primary structure comprises 198 residues: Peptidyl-tRNA hydrolase (198 aa).

Tyrosine 14 contacts tRNA. Histidine 19 acts as the Proton acceptor in catalysis. TRNA is bound by residues tyrosine 64, asparagine 66, and asparagine 113.

Belongs to the PTH family. In terms of assembly, monomer.

It is found in the cytoplasm. The catalysed reaction is an N-acyl-L-alpha-aminoacyl-tRNA + H2O = an N-acyl-L-amino acid + a tRNA + H(+). Functionally, hydrolyzes ribosome-free peptidyl-tRNAs (with 1 or more amino acids incorporated), which drop off the ribosome during protein synthesis, or as a result of ribosome stalling. Its function is as follows. Catalyzes the release of premature peptidyl moieties from peptidyl-tRNA molecules trapped in stalled 50S ribosomal subunits, and thus maintains levels of free tRNAs and 50S ribosomes. In Acidobacterium capsulatum (strain ATCC 51196 / DSM 11244 / BCRC 80197 / JCM 7670 / NBRC 15755 / NCIMB 13165 / 161), this protein is Peptidyl-tRNA hydrolase.